An 81-amino-acid polypeptide reads, in one-letter code: uncharacterized protein (81 aa).

Helical transmembrane passes span 27-47 and 54-74; these read ASLL…LNLT and IFGA…IFIM.

It is found in the cell membrane. This is an uncharacterized protein from Bacillus subtilis (strain 168).